The chain runs to 1194 residues: Immunoglobulin superfamily member 3 (1194 aa).

The first 19 residues, 1–19 (MKCFFPVLSCLAVLGVVSA), serve as a signal peptide directing secretion. Ig-like C2-type domains follow at residues 20–138 (QRQV…AKMN), 143–262 (PDSL…WYAM), 276–386 (PTDK…KTVT), 401–539 (PIIV…ISIT), 545–661 (FAVT…WTRL), 676–803 (PVTK…EEVS), 813–945 (PDSR…TALT), and 949–1097 (PDAS…YRLT). The Extracellular segment spans residues 20–1124 (QRQVTVQEGP…LQSIICSNDA (1105 aa)). Intrachain disulfides connect C42-C120 and C167-C246. Residue N43 is glycosylated (N-linked (GlcNAc...) asparagine). The EWI motif motif lies at 250–252 (EWI). A disulfide bond links C302 and C376. A glycan (N-linked (GlcNAc...) asparagine) is linked at N418. 2 cysteine pairs are disulfide-bonded: C432-C511 and C566-C645. An N-linked (GlcNAc...) asparagine glycan is attached at N655. Disulfide bonds link C701–C782, C838–C918, and C974–C1080. The N-linked (GlcNAc...) asparagine glycan is linked to N842. The disordered stretch occupies residues 997–1033 (AGGKRSSPGLEEQEEEREEEEEEDDDDDDDPTERTAL). The segment covering 1007-1027 (EEQEEEREEEEEEDDDDDDDP) has biased composition (acidic residues). Residue N1077 is glycosylated (N-linked (GlcNAc...) asparagine). The helical transmembrane segment at 1125–1145 (LFYFVFFYPFPIFGILIITIL) threads the bilayer. At 1146-1194 (LVRFKSRNSSKNSDGKNGVPLLWIKEPHLNYSPTCLEPPVLSIHPGAID) the chain is on the cytoplasmic side.

Expressed in a wide range of tissues with High expression in Placenta, kidney and lung.

The protein localises to the membrane. This chain is Immunoglobulin superfamily member 3 (IGSF3), found in Homo sapiens (Human).